A 637-amino-acid chain; its full sequence is Neurexin-3-beta (637 aa).

The N-terminal stretch at 1–35 (MHLRIHARRSPPRRPAWTLGIWFLFWGCIVSSVWS) is a signal peptide. Topologically, residues 36–562 (SSNVASSSST…EVIRESSSTT (527 aa)) are extracellular. The span at 43 to 52 (SSTSSSPGSH) shows a compositional bias: low complexity. The segment at 43 to 65 (SSTSSSPGSHSQHEHHFHGSKHH) is disordered. The span at 55-65 (HEHHFHGSKHH) shows a compositional bias: basic residues. One can recognise a Laminin G-like domain in the interval 85–255 (ATYIFGKSGG…NPNIKINGSV (171 aa)). Aspartate 137 and isoleucine 154 together coordinate Ca(2+). An N-linked (GlcNAc...) asparagine glycan is attached at asparagine 184. The Ca(2+) site is built by isoleucine 206 and asparagine 208. Asparagine 252 and asparagine 296 each carry an N-linked (GlcNAc...) asparagine glycan. The disordered stretch occupies residues 289–310 (ATTTTRKNRSTASIQPTSDDLV). Polar residues predominate over residues 298–310 (STASIQPTSDDLV). A glycan (O-linked (Xyl...) (heparan sulfate) serine) is linked at serine 312. The helical transmembrane segment at 563–583 (GMVVGIVAAAALCILILLYAM) threads the bilayer. The Cytoplasmic segment spans residues 584–637 (YKYRNRDEGSYQVDETRNYISNSAQSNGTLMKEKQQSSKSGHKKQKNKDREYYV). Positions 605-637 (NSAQSNGTLMKEKQQSSKSGHKKQKNKDREYYV) are disordered.

Belongs to the neurexin family. As to quaternary structure, weakly interacts with CBLN1 and CBLN2. Very weak binding, if any, to CBLN4. Specific isoforms bind neuroligins NLGN1, NLGN2 and NLGN3. Interacts with CLSTN3. In terms of processing, processed by alpha-secretase leading to the formation of an extracellular soluble protein as well as a C-terminal membrane-embedded fragment (CTF). Proteolysis of these CTFs by gamma-secretase releases intracellular domains (ICDs) and extracellular peptides. O-glycosylated; contains heparan sulfate. Heparan sulfate attachment is required for synapse development by mediating interactions with neuroligins. In terms of tissue distribution, expressed in the blood vessel walls (at protein level).

Its subcellular location is the presynaptic cell membrane. Neuronal cell surface protein that may be involved in cell recognition and cell adhesion. May mediate intracellular signaling. Functions as part of a trans-synaptic complex by binding to cerebellins and postsynaptic GRID1. This interaction helps regulate the activity of NMDA and AMPA receptors at hippocampal synapses without affecting synapse formation. NRXN3B-CBLN2-GRID1 complex transduce presynaptic signals into postsynaptic AMPAR response. The sequence is that of Neurexin-3-beta from Homo sapiens (Human).